An 898-amino-acid polypeptide reads, in one-letter code: Putative aconitate hydratase, cytoplasmic (898 aa).

Residues glutamine 90 and 209–211 (DSH) each bind substrate. Cysteine 441, cysteine 507, and cysteine 510 together coordinate [4Fe-4S] cluster. Residues arginine 540, arginine 545, arginine 703, and 784-785 (SR) contribute to the substrate site.

It belongs to the aconitase/IPM isomerase family. It depends on [4Fe-4S] cluster as a cofactor.

Its subcellular location is the cytoplasm. The catalysed reaction is citrate = D-threo-isocitrate. It participates in carbohydrate metabolism; glyoxylate and dicarboxylate metabolism. Functionally, catalyzes the isomerization of citrate to isocitrate via cis-aconitate. This chain is Putative aconitate hydratase, cytoplasmic, found in Oryza sativa subsp. japonica (Rice).